Reading from the N-terminus, the 81-residue chain is NAD(P)H-quinone oxidoreductase subunit O (81 aa).

The protein belongs to the complex I NdhO subunit family. As to quaternary structure, NDH-1 can be composed of about 15 different subunits; different subcomplexes with different compositions have been identified which probably have different functions.

It localises to the cellular thylakoid membrane. It catalyses the reaction a plastoquinone + NADH + (n+1) H(+)(in) = a plastoquinol + NAD(+) + n H(+)(out). The catalysed reaction is a plastoquinone + NADPH + (n+1) H(+)(in) = a plastoquinol + NADP(+) + n H(+)(out). Functionally, NDH-1 shuttles electrons from an unknown electron donor, via FMN and iron-sulfur (Fe-S) centers, to quinones in the respiratory and/or the photosynthetic chain. The immediate electron acceptor for the enzyme in this species is believed to be plastoquinone. Couples the redox reaction to proton translocation, and thus conserves the redox energy in a proton gradient. Cyanobacterial NDH-1 also plays a role in inorganic carbon-concentration. In Prochlorococcus marinus (strain MIT 9303), this protein is NAD(P)H-quinone oxidoreductase subunit O.